The chain runs to 536 residues: MLDNFDKLNLQMRILIATAISLLFFIPYSYFFAPVKEAPLKESTSMERAEQQAAPQTSSSPKEGQVSSVAMAETSPSKDIIATVQGSHFRLEIDSLGRIAQVYLKDAKFLKEQKELPLLAPLSSLRPLEVRFSDATTNKEAFAKSYYSDRDLVEIRNTPETLTLTQELEGFKLTKKLTFYPDGNYDLEVETSGSQKRFFLSPGARPIAESDKFAFNGVVLKESGGTIHTTEDGDAKKDEIFEGARFVASVDRYYTTLFFVKEPQGLRVVISKNAEKNPEPFVEALDHLKLSGYIGAKDFRLLESIYPSLTDVVEYGFITFFAKPLFLLLDWLYKFCGNWGWAIVLLTLVVRIILFPLTYKGMVSMQKLKDIAPKMKEIQEKYKGDPQKLQVHMMELYKKHGANPMGGCLPLLLQMPIFFAIYRVLYNAIELKGADWILWINDLSVMDPYFILPILMGASMFLQQHLTPTTFTDPMQEKVFKFLPLIFTFFFVTFPSGLVLYWFVSNVFSIAQQLFINKTLEAKKRAAAAKPSGLSD.

The chain crosses the membrane as a helical span at residues 14 to 34 (ILIATAISLLFFIPYSYFFAP). The interval 43–69 (STSMERAEQQAAPQTSSSPKEGQVSSV) is disordered. Residues 53–68 (AAPQTSSSPKEGQVSS) are compositionally biased toward polar residues. The next 5 helical transmembrane spans lie at 312-332 (VVEY…LDWL), 339-359 (WGWA…PLTY), 401-421 (GANP…FFAI), 436-456 (WILW…PILM), and 484-504 (PLIF…YWFV).

Belongs to the OXA1/ALB3/YidC family. Type 1 subfamily. In terms of assembly, interacts with the Sec translocase complex via SecD. Specifically interacts with transmembrane segments of nascent integral membrane proteins during membrane integration.

The protein localises to the cell inner membrane. Its function is as follows. Required for the insertion and/or proper folding and/or complex formation of integral membrane proteins into the membrane. Involved in integration of membrane proteins that insert both dependently and independently of the Sec translocase complex, as well as at least some lipoproteins. Aids folding of multispanning membrane proteins. This is Membrane protein insertase YidC from Wolinella succinogenes (strain ATCC 29543 / DSM 1740 / CCUG 13145 / JCM 31913 / LMG 7466 / NCTC 11488 / FDC 602W) (Vibrio succinogenes).